A 137-amino-acid polypeptide reads, in one-letter code: Bombinin-like peptides 1 (137 aa).

The first 18 residues, 1 to 18 (MNFKYIVAVSILIASAYA), serve as a signal peptide directing secretion. The residue at position 70 (asparagine 70) is an Asparagine amide. The tract at residues 91–112 (LDSFEHPEEASEKETRGFNQEE) is disordered. Isoleucine 118 carries the post-translational modification D-allo-isoleucine. Isoleucine 136 is subject to Isoleucine amide.

The protein belongs to the bombinin family. As to expression, expressed by the skin glands.

It localises to the secreted. Has antimicrobial activity, but no hemolytic activity. Preliminary evidence indicates that this peptide does not lyse and thus kill the bacteria by its antimicrobial activity. In terms of biological role, bombinin H has antibacterial and hemolytic activity. In Bombina variegata (Yellow-bellied toad), this protein is Bombinin-like peptides 1.